We begin with the raw amino-acid sequence, 396 residues long: Probable tRNA sulfurtransferase (396 aa).

In terms of domain architecture, THUMP spans A63–I166. ATP-binding positions include L184–Y185, R266, G288, and Q297.

The protein belongs to the ThiI family.

It is found in the cytoplasm. It catalyses the reaction [ThiI sulfur-carrier protein]-S-sulfanyl-L-cysteine + a uridine in tRNA + 2 reduced [2Fe-2S]-[ferredoxin] + ATP + H(+) = [ThiI sulfur-carrier protein]-L-cysteine + a 4-thiouridine in tRNA + 2 oxidized [2Fe-2S]-[ferredoxin] + AMP + diphosphate. The catalysed reaction is [ThiS sulfur-carrier protein]-C-terminal Gly-Gly-AMP + S-sulfanyl-L-cysteinyl-[cysteine desulfurase] + AH2 = [ThiS sulfur-carrier protein]-C-terminal-Gly-aminoethanethioate + L-cysteinyl-[cysteine desulfurase] + A + AMP + 2 H(+). The protein operates within cofactor biosynthesis; thiamine diphosphate biosynthesis. Its function is as follows. Catalyzes the ATP-dependent transfer of a sulfur to tRNA to produce 4-thiouridine in position 8 of tRNAs, which functions as a near-UV photosensor. Also catalyzes the transfer of sulfur to the sulfur carrier protein ThiS, forming ThiS-thiocarboxylate. This is a step in the synthesis of thiazole, in the thiamine biosynthesis pathway. The sulfur is donated as persulfide by IscS. The chain is Probable tRNA sulfurtransferase from Aeropyrum pernix (strain ATCC 700893 / DSM 11879 / JCM 9820 / NBRC 100138 / K1).